Reading from the N-terminus, the 286-residue chain is Bifunctional protein FolD (286 aa).

Residues G165–S167, S190, and V231 each bind NADP(+).

The protein belongs to the tetrahydrofolate dehydrogenase/cyclohydrolase family. In terms of assembly, homodimer.

It carries out the reaction (6R)-5,10-methylene-5,6,7,8-tetrahydrofolate + NADP(+) = (6R)-5,10-methenyltetrahydrofolate + NADPH. The enzyme catalyses (6R)-5,10-methenyltetrahydrofolate + H2O = (6R)-10-formyltetrahydrofolate + H(+). It participates in one-carbon metabolism; tetrahydrofolate interconversion. Its function is as follows. Catalyzes the oxidation of 5,10-methylenetetrahydrofolate to 5,10-methenyltetrahydrofolate and then the hydrolysis of 5,10-methenyltetrahydrofolate to 10-formyltetrahydrofolate. The sequence is that of Bifunctional protein FolD from Bacillus thuringiensis (strain Al Hakam).